The sequence spans 323 residues: Prenyl transferase (323 aa).

Isopentenyl diphosphate contacts are provided by K46, R49, and H81. Residues D88 and D92 each coordinate Mg(2+). Position 97 (R97) interacts with an all-trans-polyprenyl diphosphate. R98 provides a ligand contact to isopentenyl diphosphate. An all-trans-polyprenyl diphosphate-binding residues include K174, T175, and Q212.

Belongs to the FPP/GGPP synthase family. The cofactor is Mg(2+).

The protein resides in the plastid. The protein localises to the cyanelle. In terms of biological role, possible role in synthesis of the nonaprenyl side chain of plastoquinone or in synthesis of other prenyl chains such as undekaprenyl pyrophosphate. In Cyanophora paradoxa, this protein is Prenyl transferase (preA).